Here is a 1662-residue protein sequence, read N- to C-terminus: Putative mediator of RNA polymerase II transcription subunit 23 (1662 aa).

4 disordered regions span residues 1-24 (MYTN…PQQQ), 95-139 (QQRP…QSQP), 206-252 (TTTP…STTN), and 1530-1572 (GYDD…QDTN). Residues 39–122 (QQQNIQQQQQ…QQSQQQQASL (84 aa)) are a coiled coil. Residues 95 to 124 (QQRPQTPQQNAQQQSQQSQQSQQQQASLGQ) are compositionally biased toward low complexity. Acidic residues predominate over residues 1532 to 1560 (DDDDDDEDDDYYDEDDEDEDDDNEDDQQD).

Belongs to the Mediator complex subunit 23 family. As to quaternary structure, component of the Mediator complex.

The protein resides in the nucleus. In terms of biological role, component of the Mediator complex, a coactivator involved in the regulated transcription of nearly all RNA polymerase II-dependent genes. Mediator functions as a bridge to convey information from gene-specific regulatory proteins to the basal RNA polymerase II transcription machinery. Mediator is recruited to promoters by direct interactions with regulatory proteins and serves as a scaffold for the assembly of a functional preinitiation complex with RNA polymerase II and the general transcription factors. The protein is Putative mediator of RNA polymerase II transcription subunit 23 (med23) of Dictyostelium discoideum (Social amoeba).